Reading from the N-terminus, the 553-residue chain is Formate--tetrahydrofolate ligase (553 aa).

63–70 provides a ligand contact to ATP; it reads TPAGEGKT.

Belongs to the formate--tetrahydrofolate ligase family.

It catalyses the reaction (6S)-5,6,7,8-tetrahydrofolate + formate + ATP = (6R)-10-formyltetrahydrofolate + ADP + phosphate. It functions in the pathway one-carbon metabolism; tetrahydrofolate interconversion. The protein is Formate--tetrahydrofolate ligase of Oenococcus oeni (strain ATCC BAA-331 / PSU-1).